The following is a 510-amino-acid chain: ATP synthase subunit alpha (510 aa).

Position 170–177 (170–177) interacts with ATP; it reads GDRQTGKT.

It belongs to the ATPase alpha/beta chains family. In terms of assembly, F-type ATPases have 2 components, CF(1) - the catalytic core - and CF(0) - the membrane proton channel. CF(1) has five subunits: alpha(3), beta(3), gamma(1), delta(1), epsilon(1). CF(0) has three main subunits: a(1), b(2) and c(9-12). The alpha and beta chains form an alternating ring which encloses part of the gamma chain. CF(1) is attached to CF(0) by a central stalk formed by the gamma and epsilon chains, while a peripheral stalk is formed by the delta and b chains.

It is found in the cell inner membrane. The enzyme catalyses ATP + H2O + 4 H(+)(in) = ADP + phosphate + 5 H(+)(out). In terms of biological role, produces ATP from ADP in the presence of a proton gradient across the membrane. The alpha chain is a regulatory subunit. The sequence is that of ATP synthase subunit alpha from Acidiphilium cryptum (strain JF-5).